The following is a 741-amino-acid chain: uncharacterized protein (741 aa).

A signal peptide spans 1-22 (MKSVKIIIILALALLIQISHIA).

This is an uncharacterized protein from Archaeoglobus fulgidus (strain ATCC 49558 / DSM 4304 / JCM 9628 / NBRC 100126 / VC-16).